Consider the following 172-residue polypeptide: Small ribosomal subunit protein uS5c (172 aa).

Residues 15-78 enclose the S5 DRBM domain; it reads WEEKVVQVKR…TDAKKHIINV (64 aa).

The protein belongs to the universal ribosomal protein uS5 family. In terms of assembly, part of the 30S ribosomal subunit. Contacts protein S4.

It is found in the plastid. Its subcellular location is the chloroplast. With S4 and S12 plays an important role in translational accuracy. This Gracilaria tenuistipitata var. liui (Red alga) protein is Small ribosomal subunit protein uS5c (rps5).